We begin with the raw amino-acid sequence, 423 residues long: Steroid hormone receptor ERR1 (423 aa).

Residues 1 to 67 (MSSQVVGIEP…GAGPGEQGGG (67 aa)) are disordered. The segment at 1–76 (MSSQVVGIEP…GKLVLSSLPK (76 aa)) is repressor domain. Lys-14 participates in a covalent cross-link: Glycyl lysine isopeptide (Lys-Gly) (interchain with G-Cter in SUMO). 2 positions are modified to phosphoserine: Ser-19 and Ser-22. Residues 58–67 (GAGPGEQGGG) are compositionally biased toward gly residues. Positions 76-151 (KRLCLVCGDV…VGMLKEGVRL (76 aa)) form a DNA-binding region, nuclear receptor. NR C4-type zinc fingers lie at residues 79-99 (CLVCGDVASGYHYGVASCEAC) and 115-134 (CPASNECEITKRRRKACQAC). 4 positions are modified to N6-acetyllysine; by PCAF/KAT2B: Lys-129, Lys-138, Lys-160, and Lys-162. A Glycyl lysine isopeptide (Lys-Gly) (interchain with G-Cter in SUMO2) cross-link involves residue Lys-189. One can recognise an NR LBD domain in the interval 193–421 (PVNALVSHLL…KLFLEMLEAM (229 aa)). A Glycyl lysine isopeptide (Lys-Gly) (interchain with G-Cter in SUMO); alternate cross-link involves residue Lys-403. Residue Lys-403 forms a Glycyl lysine isopeptide (Lys-Gly) (interchain with G-Cter in SUMO2); alternate linkage. The tract at residues 403-423 (KLEGKVPMHKLFLEMLEAMMD) is AF-2 domain.

This sequence belongs to the nuclear hormone receptor family. NR3 subfamily. Binds DNA as a monomer or a homodimer. Interacts (via the AF2 domain) with coactivator PPARGC1A (via the L3 motif); the interaction greatly enhances transcriptional activity of genes involved in energy metabolism. Interacts with PIAS4; the interaction enhances sumoylation. Interacts with MAPK15; promotes re-localization of ESRRA to the cytoplasm through a XPO1-dependent mechanism then inhibits ESRRA transcriptional activity. Post-translationally, phosphorylation on Ser-19 enhances sumoylation on Lys-14 increasing repression of transcriptional activity. Sumoylated with SUMO2. Main site is Lys-14 which is enhanced by phosphorylation on Ser-19, cofactor activation, and by interaction with PIAS4. Sumoylation enhances repression of transcriptional activity, but has no effect on subcellular location nor on DNA binding. In terms of processing, reversibly acetylated. Acetylation by PCAF/KAT2 at Lys-129, Lys-138, Lys-160 and Lys-162 and PCAF/KAT2 decreases transcriptional activity probably by inhibiting DNA-binding activity; deacetylation involves SIRT1 and HDAC8 and increases DNA-binding.

It is found in the nucleus. It localises to the cytoplasm. Functionally, binds to an ERR-alpha response element (ERRE) containing a single consensus half-site, 5'-TNAAGGTCA-3'. Can bind to the medium-chain acyl coenzyme A dehydrogenase (MCAD) response element NRRE-1 and may act as an important regulator of MCAD promoter. Binds to the C1 region of the lactoferrin gene promoter. Requires dimerization and the coactivator, PGC-1A, for full activity. The ERRalpha/PGC1alpha complex is a regulator of energy metabolism. Induces the expression of PERM1 in the skeletal muscle. The protein is Steroid hormone receptor ERR1 (ESRRA) of Homo sapiens (Human).